Reading from the N-terminus, the 274-residue chain is Aspartate/glutamate leucyltransferase (274 aa).

Belongs to the R-transferase family. Bpt subfamily.

The protein localises to the cytoplasm. The catalysed reaction is N-terminal L-glutamyl-[protein] + L-leucyl-tRNA(Leu) = N-terminal L-leucyl-L-glutamyl-[protein] + tRNA(Leu) + H(+). The enzyme catalyses N-terminal L-aspartyl-[protein] + L-leucyl-tRNA(Leu) = N-terminal L-leucyl-L-aspartyl-[protein] + tRNA(Leu) + H(+). Functionally, functions in the N-end rule pathway of protein degradation where it conjugates Leu from its aminoacyl-tRNA to the N-termini of proteins containing an N-terminal aspartate or glutamate. The polypeptide is Aspartate/glutamate leucyltransferase (Ruegeria sp. (strain TM1040) (Silicibacter sp.)).